The sequence spans 692 residues: Glycine--tRNA ligase beta subunit (692 aa).

The protein belongs to the class-II aminoacyl-tRNA synthetase family. In terms of assembly, tetramer of two alpha and two beta subunits.

The protein resides in the cytoplasm. The catalysed reaction is tRNA(Gly) + glycine + ATP = glycyl-tRNA(Gly) + AMP + diphosphate. The sequence is that of Glycine--tRNA ligase beta subunit from Limosilactobacillus fermentum (strain NBRC 3956 / LMG 18251) (Lactobacillus fermentum).